Reading from the N-terminus, the 288-residue chain is Transmembrane protein 163 (288 aa).

The disordered stretch occupies residues 1-64; the sequence is MEPALGSERR…ESGQFSDGLE (64 aa). Over 1 to 87 the chain is Cytoplasmic; that stretch reads MEPALGSERR…HEAQNYRKKA (87 aa). S11 is subject to Phosphoserine. Pro residues predominate over residues 12 to 24; it reads PPGPGVPRPPPRG. Residues 25–42 show a composition bias toward low complexity; that stretch reads HAPSTAAPAPSPAPMSSS. Residues 41-71 are required for interaction with MCOLN1; the sequence is SSVQSDEERQPRISESGQFSDGLEDRGLLES. 4 positions are modified to phosphoserine: S45, S54, S56, and S60. A helical membrane pass occupies residues 88-108; it reads LWVSWLSIIVTLALAVAAFTV. The Extracellular portion of the chain corresponds to 109–115; it reads SVMRYSA. A helical membrane pass occupies residues 116–136; it reads SAFGFAFDAILDVLSSAIVLW. Residues 137 to 149 lie on the Cytoplasmic side of the membrane; that stretch reads RYSNAAAVHSANR. Residues 150–170 traverse the membrane as a helical segment; it reads EYIACVILGVIFLLSSICIVV. The Extracellular segment spans residues 171–186; the sequence is KAIHDLSTRLLPEVDD. A helical transmembrane segment spans residues 187–207; the sequence is FLFSVSILSGILCSVLAVLKF. Over 208–216 the chain is Cytoplasmic; sequence MLGKVLTSR. The helical transmembrane segment at 217 to 237 threads the bilayer; sequence ALITDGFNSLVGGVMGFSILL. Over 238 to 254 the chain is Extracellular; that stretch reads SAEVFKHNAAVWYLDGS. A helical membrane pass occupies residues 255 to 275; it reads IGVLIGLTIFAYGVKLLIDMV. The Cytoplasmic segment spans residues 276 to 288; that stretch reads PRVRQTRHYEMFE.

The protein belongs to the TMEM163 family. As to quaternary structure, homodimer. Interacts with MCOLN1. Interacts with SLC30A1, SLC30A2, SLC30A3 and SLC30A4. Widely expressed, with high expression in the brain, cerebellum, heart, lung and spleen. In the brain, mainly expressed in the glutaminergic neuron subpopulations.

The protein localises to the cytoplasmic vesicle. It is found in the secretory vesicle. The protein resides in the synaptic vesicle membrane. It localises to the early endosome membrane. Its subcellular location is the late endosome membrane. The protein localises to the lysosome membrane. It is found in the cell membrane. It carries out the reaction Zn(2+)(in) = Zn(2+)(out). In terms of biological role, zinc ion transporter that mediates zinc efflux and plays a crucial role in intracellular zinc homeostasis. Binds the divalent cations Zn(2+), Ni(2+), and to a minor extent Cu(2+). Is a functional modulator of P2X purinoceptors, including P2RX1, P2RX3, P2RX4 and P2RX7. Plays a role in central nervous system development and is required for myelination, and survival and proliferation of oligodendrocytes. The polypeptide is Transmembrane protein 163 (Tmem163) (Mus musculus (Mouse)).